The primary structure comprises 161 residues: 2-C-methyl-D-erythritol 2,4-cyclodiphosphate synthase (161 aa).

A divalent metal cation is bound by residues Asp8 and His10. 4-CDP-2-C-methyl-D-erythritol 2-phosphate contacts are provided by residues 8 to 10 (DLH) and 34 to 35 (HS). A divalent metal cation is bound at residue His42. Residues 56–58 (DIG) and Arg142 each bind 4-CDP-2-C-methyl-D-erythritol 2-phosphate.

The protein belongs to the IspF family. Homotrimer. A divalent metal cation serves as cofactor.

The enzyme catalyses 4-CDP-2-C-methyl-D-erythritol 2-phosphate = 2-C-methyl-D-erythritol 2,4-cyclic diphosphate + CMP. Its pathway is isoprenoid biosynthesis; isopentenyl diphosphate biosynthesis via DXP pathway; isopentenyl diphosphate from 1-deoxy-D-xylulose 5-phosphate: step 4/6. In terms of biological role, involved in the biosynthesis of isopentenyl diphosphate (IPP) and dimethylallyl diphosphate (DMAPP), two major building blocks of isoprenoid compounds. Catalyzes the conversion of 4-diphosphocytidyl-2-C-methyl-D-erythritol 2-phosphate (CDP-ME2P) to 2-C-methyl-D-erythritol 2,4-cyclodiphosphate (ME-CPP) with a corresponding release of cytidine 5-monophosphate (CMP). The polypeptide is 2-C-methyl-D-erythritol 2,4-cyclodiphosphate synthase (Treponema denticola (strain ATCC 35405 / DSM 14222 / CIP 103919 / JCM 8153 / KCTC 15104)).